Consider the following 424-residue polypeptide: Tyrosine--tRNA ligase (424 aa).

An L-tyrosine-binding site is contributed by Y37. The 'HIGH' region motif lies at 42-51 (PTADSLHLGH). At K144 the chain carries N6-acetyllysine. Positions 175 and 179 each coordinate L-tyrosine. Positions 235–239 (KFGKT) match the 'KMSKS' region motif. K238 provides a ligand contact to ATP. Residues 357–414 (ADLMQALVDSELQPSRGQARKTIASNAITINGEKQSDPEYFFKEEDRLFGRFTLLRRG) enclose the S4 RNA-binding domain.

This sequence belongs to the class-I aminoacyl-tRNA synthetase family. TyrS type 1 subfamily. Homodimer.

The protein resides in the cytoplasm. It carries out the reaction tRNA(Tyr) + L-tyrosine + ATP = L-tyrosyl-tRNA(Tyr) + AMP + diphosphate + H(+). Its function is as follows. Catalyzes the attachment of tyrosine to tRNA(Tyr) in a two-step reaction: tyrosine is first activated by ATP to form Tyr-AMP and then transferred to the acceptor end of tRNA(Tyr). The chain is Tyrosine--tRNA ligase from Shigella dysenteriae serotype 1 (strain Sd197).